The primary structure comprises 237 residues: Endonuclease V (237 aa).

2 residues coordinate Mg(2+): Asp-46 and Asp-114.

The protein belongs to the endonuclease V family. Requires Mg(2+) as cofactor.

The protein resides in the cytoplasm. The enzyme catalyses Endonucleolytic cleavage at apurinic or apyrimidinic sites to products with a 5'-phosphate.. Functionally, DNA repair enzyme involved in the repair of deaminated bases. Selectively cleaves double-stranded DNA at the second phosphodiester bond 3' to a deoxyinosine leaving behind the intact lesion on the nicked DNA. The polypeptide is Endonuclease V (Xanthomonas oryzae pv. oryzae (strain PXO99A)).